Reading from the N-terminus, the 135-residue chain is Large ribosomal subunit protein uL16c (135 aa).

This sequence belongs to the universal ribosomal protein uL16 family. Part of the 50S ribosomal subunit.

The protein resides in the plastid. The protein localises to the chloroplast. In Coffea arabica (Arabian coffee), this protein is Large ribosomal subunit protein uL16c.